Here is a 316-residue protein sequence, read N- to C-terminus: MTSGERQKPVLVILGPTASGKSALAMNIAGNLDAEIISADSRQIYRELTIGSAKPSEDDLRMVRHHFINEKTIGEPFTAGDFAEAAYARILDIHNRNKYAVVVGGSTLYLEGLLKGFGDLPPGDQEIRSRLTAELALAGGEKLFERLRKLDPIQAATLDPTKTRRLIRSLEIIEITGKTVTSLQEYRRIPALDYRIVGLSIARPILYGRIDTRVDEMIASGLVEEAEYLYKKHYSLLRTERNSALKTVGYQELFDFFEKKTDFDRAVTLIKQHTRNYAKRQLTFFKNRLNVTWMDAFGEHAAPDILRAACCRELAE.

Position 15–22 (15–22) interacts with ATP; that stretch reads GPTASGKS. 17-22 contributes to the substrate binding site; that stretch reads TASGKS. Residues 40–43 are interaction with substrate tRNA; it reads DSRQ.

This sequence belongs to the IPP transferase family. In terms of assembly, monomer. Mg(2+) serves as cofactor.

It carries out the reaction adenosine(37) in tRNA + dimethylallyl diphosphate = N(6)-dimethylallyladenosine(37) in tRNA + diphosphate. In terms of biological role, catalyzes the transfer of a dimethylallyl group onto the adenine at position 37 in tRNAs that read codons beginning with uridine, leading to the formation of N6-(dimethylallyl)adenosine (i(6)A). The protein is tRNA dimethylallyltransferase of Chlorobium limicola (strain DSM 245 / NBRC 103803 / 6330).